The chain runs to 344 residues: Protein BIM1 (344 aa).

Residue Ser2 is modified to N-acetylserine. In terms of domain architecture, Calponin-homology (CH) spans 6 to 107; that stretch reads GESRTELLTW…FLQWLKKHWI (102 aa). The interval 126 to 173 is disordered; sequence IITNNSATKPRTVSNPTTAKRSSSTGTGSAMSGGLATRHSSLGINGSR. Polar residues predominate over residues 127-146; sequence ITNNSATKPRTVSNPTTAKR. Over residues 147–159 the composition is skewed to low complexity; it reads SSSTGTGSAMSGG. Ser157 is subject to Phosphoserine. Over residues 163-173 the composition is skewed to polar residues; sequence RHSSLGINGSR. One can recognise an EB1 C-terminal domain in the interval 188–281; sequence ELTKSQETIG…LYATAEGFEM (94 aa). The segment at 292–312 is disordered; that stretch reads NLGEHGTVPNQGGYANSNGEV.

Belongs to the MAPRE family.

It is found in the cytoplasm. It localises to the cytoskeleton. Its function is as follows. Binds microtubules. The polypeptide is Protein BIM1 (BIM1) (Saccharomyces cerevisiae (strain ATCC 204508 / S288c) (Baker's yeast)).